We begin with the raw amino-acid sequence, 154 residues long: Putative NADPH-dependent 7-cyano-7-deazaguanine reductase (154 aa).

Asp-52 functions as the Proton donor in the catalytic mechanism. Residues 67–69 (VES) and 86–87 (HE) each bind substrate.

Belongs to the GTP cyclohydrolase I family. QueF type 1 subfamily.

The protein resides in the cytoplasm. It catalyses the reaction 7-aminomethyl-7-carbaguanine + 2 NADP(+) = 7-cyano-7-deazaguanine + 2 NADPH + 3 H(+). It participates in tRNA modification; tRNA-queuosine biosynthesis. In terms of biological role, catalyzes the NADPH-dependent reduction of 7-cyano-7-deazaguanine (preQ0) to 7-aminomethyl-7-deazaguanine (preQ1). This chain is Putative NADPH-dependent 7-cyano-7-deazaguanine reductase, found in Streptococcus pneumoniae serotype 4 (strain ATCC BAA-334 / TIGR4).